Reading from the N-terminus, the 100-residue chain is Integration host factor subunit alpha (100 aa).

Belongs to the bacterial histone-like protein family. In terms of assembly, heterodimer of an alpha and a beta chain.

Functionally, this protein is one of the two subunits of integration host factor, a specific DNA-binding protein that functions in genetic recombination as well as in transcriptional and translational control. This chain is Integration host factor subunit alpha, found in Caulobacter sp. (strain K31).